The primary structure comprises 150 residues: Cytosine deaminase (150 aa).

One can recognise a CMP/dCMP-type deaminase domain in the interval 3–121 (FDDKKGLQVA…KLLIENGVEV (119 aa)). N44 lines the substrate pocket. A Zn(2+)-binding site is contributed by H55. E57 functions as the Proton donor in the catalytic mechanism. Zn(2+) contacts are provided by C84 and C87. D147 provides a ligand contact to substrate.

It belongs to the cytidine and deoxycytidylate deaminase family. Homodimer. It depends on Zn(2+) as a cofactor.

The protein resides in the cytoplasm. It localises to the nucleus. It catalyses the reaction cytosine + H2O + H(+) = uracil + NH4(+). It participates in pyrimidine metabolism; UMP biosynthesis via salvage pathway; uracil from cytosine: step 1/1. Catalyzes the hydrolytic deamination of cytosine to uracil or 5-methylcytosine to thymine. Is involved in the pyrimidine salvage pathway, which allows the cell to utilize cytosine for pyrimidine nucleotide synthesis. In Candida albicans (strain SC5314 / ATCC MYA-2876) (Yeast), this protein is Cytosine deaminase.